The primary structure comprises 756 residues: LIM domain and actin-binding protein 1 (756 aa).

Met1 is subject to N-acetylmethionine. A phosphoserine mark is found at Ser15 and Ser55. The segment covering Ala44–Asn56 has biased composition (basic and acidic residues). Disordered regions lie at residues Ala44–Ile183 and Gln204–Lys377. The span at Glu107–Ala118 shows a compositional bias: low complexity. Ser130 is subject to Phosphoserine. The span at Arg140–Thr173 shows a compositional bias: basic and acidic residues. The Required for interaction with NPC1L1 signature appears at Ser164–His166. Ser221 is modified (phosphoserine). Phosphotyrosine is present on Tyr225. Phosphoserine is present on residues Ser226 and Ser238. The segment covering Glu245–Glu254 has biased composition (basic and acidic residues). Position 259 is a phosphoserine (Ser259). The span at Val274–Leu287 shows a compositional bias: polar residues. Basic and acidic residues predominate over residues Ile294–Glu303. Ser339, Ser346, Ser358, Ser365, and Ser370 each carry phosphoserine. The LIM zinc-binding domain maps to Glu384–Ser444. Lys435 carries the post-translational modification N6-succinyllysine. At Ser486 the chain carries Phosphoserine. The segment at Val489–Ser509 is required for interaction with MYO5B. The segment at Ala508–Val726 is disordered. Residues Leu512–Lys523 are compositionally biased toward basic and acidic residues. Residues Glu533–Glu542 show a composition bias toward low complexity. Basic and acidic residues predominate over residues Trp552–Ala563. Ser597, Ser600, Ser605, and Ser613 each carry phosphoserine. Over residues Ala627–Ala637 the composition is skewed to basic and acidic residues. Residues Ser638–Ser651 are compositionally biased toward polar residues. Residues Lys652–Gln667 show a composition bias toward basic and acidic residues. The span at Leu691–Gln721 shows a compositional bias: polar residues. A phosphoserine mark is found at Ser695, Ser723, and Ser738.

Interacts with NPC1L1; bridges NPC1L1 with MYO5B. Interacts with MYO5B; bridges MYO5B with NPC1L1. Interacts with PXN; this complex stabilizes actin dynamics. Interacts with F-actin and G-actin. Interacts with LUZP1 (via C-terminus); both proteins restrict ciliation and may work together to regulate this process. Binds RAB40B (GTP-bound); interaction influences LIMA1 subcellular localization in lamellipodia during cell migration. Post-translationally, phosphorylation of the C-terminal region by MAPK1/MAPK3 reduces its association with F-actin and contributes to actin filament reorganization and enhances cell motility. In terms of processing, ubiquitinated by the ECS(RAB40B) complex leading to its degradation. In terms of tissue distribution, widely expressed. Highest levels of isoform 2 are expressed in lung, spleen and small intestine. Isoform 2 is expressed at higher levels than isoform 1 in most tissues except liver, fat and kidney. Isoform 1 and isoform 2 are expressed at low levels in skeletal muscle, heart, stomach and lymph.

The protein resides in the cytoplasm. It is found in the cell junction. Its subcellular location is the focal adhesion. It localises to the cytoskeleton. The protein localises to the stress fiber. The protein resides in the cell membrane. It is found in the cell projection. Its subcellular location is the ruffle. It localises to the lamellipodium. Functionally, actin-binding protein involved in actin cytoskeleton regulation and dynamics. Increases the number and size of actin stress fibers and inhibits membrane ruffling. Inhibits actin filament depolymerization. Bundles actin filaments, delays filament nucleation and reduces formation of branched filaments. Acts as a negative regulator of primary cilium formation. Plays a role in cholesterol homeostasis. Influences plasma cholesterol levels through regulation of intestinal cholesterol absorption. May act as a scaffold protein by regulating NPC1L1 transportation, an essential protein for cholesterol absorption, to the plasma membrane by recruiting MYO5B to NPC1L1, and thus facilitates cholesterol uptake. In Sus scrofa (Pig), this protein is LIM domain and actin-binding protein 1.